The following is a 298-amino-acid chain: Homoserine kinase (298 aa).

Proline 79 to alanine 89 provides a ligand contact to ATP.

The protein belongs to the GHMP kinase family. Homoserine kinase subfamily.

The protein localises to the cytoplasm. It catalyses the reaction L-homoserine + ATP = O-phospho-L-homoserine + ADP + H(+). It participates in amino-acid biosynthesis; L-threonine biosynthesis; L-threonine from L-aspartate: step 4/5. Functionally, catalyzes the ATP-dependent phosphorylation of L-homoserine to L-homoserine phosphate. In Pyrobaculum islandicum (strain DSM 4184 / JCM 9189 / GEO3), this protein is Homoserine kinase.